Consider the following 1456-residue polypeptide: DNA polymerase gamma, mitochondrial (1456 aa).

A mitochondrion-targeting transit peptide spans methionine 1–aspartate 41. Disordered stretches follow at residues alanine 1200–aspartate 1266 and alanine 1308–proline 1443. The span at alanine 1204–valine 1239 shows a compositional bias: low complexity. Positions proline 1315–alanine 1325 are enriched in pro residues. Low complexity-rich tracts occupy residues proline 1346 to proline 1371 and threonine 1411 to threonine 1428.

This sequence belongs to the DNA polymerase type-A family. Mg(2+) serves as cofactor.

It is found in the mitochondrion. The enzyme catalyses DNA(n) + a 2'-deoxyribonucleoside 5'-triphosphate = DNA(n+1) + diphosphate. Its function is as follows. Involved in the replication of mitochondrial DNA. The chain is DNA polymerase gamma, mitochondrial (mip-1) from Neurospora crassa (strain ATCC 24698 / 74-OR23-1A / CBS 708.71 / DSM 1257 / FGSC 987).